Reading from the N-terminus, the 348-residue chain is tRNA N6-adenosine threonylcarbamoyltransferase (348 aa).

Positions 111 and 115 each coordinate Fe cation. Substrate contacts are provided by residues 134-138, D167, G180, D184, and N279; that span reads LVSGG. Position 307 (D307) interacts with Fe cation.

Belongs to the KAE1 / TsaD family. Fe(2+) serves as cofactor.

The protein localises to the cytoplasm. It catalyses the reaction L-threonylcarbamoyladenylate + adenosine(37) in tRNA = N(6)-L-threonylcarbamoyladenosine(37) in tRNA + AMP + H(+). Functionally, required for the formation of a threonylcarbamoyl group on adenosine at position 37 (t(6)A37) in tRNAs that read codons beginning with adenine. Is involved in the transfer of the threonylcarbamoyl moiety of threonylcarbamoyl-AMP (TC-AMP) to the N6 group of A37, together with TsaE and TsaB. TsaD likely plays a direct catalytic role in this reaction. The chain is tRNA N6-adenosine threonylcarbamoyltransferase from Synechocystis sp. (strain ATCC 27184 / PCC 6803 / Kazusa).